The primary structure comprises 260 residues: Pyridoxine 5'-phosphate synthase (260 aa).

Residues Asn-10 and Arg-21 each contribute to the 3-amino-2-oxopropyl phosphate site. His-46 (proton acceptor) is an active-site residue. Arg-48 and His-53 together coordinate 1-deoxy-D-xylulose 5-phosphate. Glu-76 (proton acceptor) is an active-site residue. Thr-113 lines the 1-deoxy-D-xylulose 5-phosphate pocket. His-204 serves as the catalytic Proton donor. 3-amino-2-oxopropyl phosphate-binding positions include Asp-205 and 227-228 (GH).

Belongs to the PNP synthase family. In terms of assembly, homooctamer; tetramer of dimers.

Its subcellular location is the cytoplasm. It carries out the reaction 3-amino-2-oxopropyl phosphate + 1-deoxy-D-xylulose 5-phosphate = pyridoxine 5'-phosphate + phosphate + 2 H2O + H(+). It functions in the pathway cofactor biosynthesis; pyridoxine 5'-phosphate biosynthesis; pyridoxine 5'-phosphate from D-erythrose 4-phosphate: step 5/5. Its function is as follows. Catalyzes the complicated ring closure reaction between the two acyclic compounds 1-deoxy-D-xylulose-5-phosphate (DXP) and 3-amino-2-oxopropyl phosphate (1-amino-acetone-3-phosphate or AAP) to form pyridoxine 5'-phosphate (PNP) and inorganic phosphate. The sequence is that of Pyridoxine 5'-phosphate synthase from Xylella fastidiosa (strain M12).